Reading from the N-terminus, the 606-residue chain is RUN and FYVE domain-containing protein 2 (606 aa).

Positions 37–169 (DSDYPPLQQF…IDANLCVKGE (133 aa)) constitute an RUN domain. Residues 210 to 534 (EELNRQLNST…IKEANKALQG (325 aa)) are a coiled coil. The FYVE-type zinc finger occupies 540–598 (DKEATHCKLCEKEFSLSKRKHHCRNCGEIFCNACSDNELPLPSSPKPVRVCDSCHALLI). Residues cysteine 546, cysteine 549, cysteine 562, cysteine 565, cysteine 570, cysteine 573, cysteine 590, and cysteine 593 each contribute to the Zn(2+) site.

Interacts with BMX.

Its subcellular location is the nucleus. The chain is RUN and FYVE domain-containing protein 2 (RUFY2) from Pongo abelii (Sumatran orangutan).